A 148-amino-acid polypeptide reads, in one-letter code: Snaclec 4 (148 aa).

An N-terminal signal peptide occupies residues 1-23 (MGRFIFVSFSLLVVFFSLSGTEA). In terms of domain architecture, C-type lectin spans 34–148 (YDQNCYKAFE…DTQFRLQEPG (115 aa)).

This sequence belongs to the snaclec family. Heterodimer; disulfide-linked. Contains disulfide bonds. Expressed by the venom gland.

Its subcellular location is the secreted. In terms of biological role, interferes with one step of hemostasis (modulation of platelet aggregation, or coagulation cascade, for example). The polypeptide is Snaclec 4 (Echis pyramidum leakeyi (Leakey's carpet viper)).